The sequence spans 227 residues: Germin-like protein 3-3 (227 aa).

A signal peptide spans 1 to 26 (MECFKTTLAGVVLVVLLLQQAPVLRA). An intrachain disulfide couples C36 to C51. One can recognise a Cupin type-1 domain in the interval 65–217 (SRLATGGDVN…ALRVDAGVVE (153 aa)). N-linked (GlcNAc...) asparagine glycosylation is found at N78 and N81. Residues H114, H116, E121, and H163 each contribute to the Mn(2+) site.

This sequence belongs to the germin family. In terms of assembly, oligomer (believed to be a pentamer but probably hexamer).

Its subcellular location is the secreted. It localises to the extracellular space. It is found in the apoplast. In terms of biological role, may play a role in plant defense. Probably has no oxalate oxidase activity even if the active site is conserved. The polypeptide is Germin-like protein 3-3 (Oryza sativa subsp. japonica (Rice)).